Here is a 446-residue protein sequence, read N- to C-terminus: tRNA modification GTPase MnmE (446 aa).

Positions 24, 81, and 120 each coordinate (6S)-5-formyl-5,6,7,8-tetrahydrofolate. Residues 216–368 (GLHAVLIGPP…LHTRLRELAL (153 aa)) form the TrmE-type G domain. Asn226 contributes to the K(+) binding site. GTP contacts are provided by residues 226–231 (NAGKSS), 245–251 (TDVAGTT), and 270–273 (DTAG). A Mg(2+)-binding site is contributed by Ser230. Positions 245, 247, and 250 each coordinate K(+). Thr251 lines the Mg(2+) pocket. Lys446 contributes to the (6S)-5-formyl-5,6,7,8-tetrahydrofolate binding site.

The protein belongs to the TRAFAC class TrmE-Era-EngA-EngB-Septin-like GTPase superfamily. TrmE GTPase family. As to quaternary structure, homodimer. Heterotetramer of two MnmE and two MnmG subunits. K(+) is required as a cofactor.

The protein localises to the cytoplasm. In terms of biological role, exhibits a very high intrinsic GTPase hydrolysis rate. Involved in the addition of a carboxymethylaminomethyl (cmnm) group at the wobble position (U34) of certain tRNAs, forming tRNA-cmnm(5)s(2)U34. The sequence is that of tRNA modification GTPase MnmE from Xanthomonas campestris pv. campestris (strain 8004).